We begin with the raw amino-acid sequence, 850 residues long: G-type lectin S-receptor-like serine/threonine-protein kinase CES101 (850 aa).

Residues 1–22 (MWSNCIFLTLFTFYLFLGQSCC) form the signal peptide. At 23–423 (QTDTLLQGQY…IKGSKLAATW (401 aa)) the chain is on the extracellular side. In terms of domain architecture, Bulb-type lectin spans 24 to 144 (TDTLLQGQYL…DSDGSMKRTL (121 aa)). Residues N55, N118, N194, and N374 are each glycosylated (N-linked (GlcNAc...) asparagine). Residues 334–416 (CSRFGYTFRE…PRTIYIRIKG (83 aa)) enclose the PAN domain. Cystine bridges form between C367-C390 and C371-C377. A helical membrane pass occupies residues 424 to 444 (LVVVASLFLIIPVTWLIIYLV). Topologically, residues 445–850 (LRKFKIKGTN…RVTITVMEAR (406 aa)) are cytoplasmic. The Protein kinase domain occupies 527–816 (FSDANKLGEG…ALSLPKEPAF (290 aa)). ATP-binding positions include 533–541 (LGEGGFGPV) and K555. Residue S561 is modified to Phosphoserine. The segment at 616-633 (LRKIVLDWKLRFRIMEGI) is caM-binding. D652 functions as the Proton acceptor in the catalytic mechanism. S669 carries the phosphoserine modification. Phosphothreonine is present on T686. 2 positions are modified to phosphoserine: S730 and S838. T845 bears the Phosphothreonine mark.

The protein belongs to the protein kinase superfamily. Ser/Thr protein kinase family. In terms of tissue distribution, mostly expressed in leaves, and, to a lower extent, in roots and flowers.

The protein resides in the cell membrane. The catalysed reaction is L-seryl-[protein] + ATP = O-phospho-L-seryl-[protein] + ADP + H(+). The enzyme catalyses L-threonyl-[protein] + ATP = O-phospho-L-threonyl-[protein] + ADP + H(+). Promotes the expression of genes involved in photosynthesis at least in dedifferentiated calli. The polypeptide is G-type lectin S-receptor-like serine/threonine-protein kinase CES101 (CES101) (Arabidopsis thaliana (Mouse-ear cress)).